Here is a 226-residue protein sequence, read N- to C-terminus: Triosephosphate isomerase (226 aa).

13–15 (NFK) is a substrate binding site. Residue His-97 is the Electrophile of the active site. Residue Glu-145 is the Proton acceptor of the active site. Substrate-binding positions include Ile-150, Gly-185, and 206–207 (AS).

This sequence belongs to the triosephosphate isomerase family. Homotetramer; dimer of dimers.

Its subcellular location is the cytoplasm. The catalysed reaction is D-glyceraldehyde 3-phosphate = dihydroxyacetone phosphate. It functions in the pathway carbohydrate biosynthesis; gluconeogenesis. The protein operates within carbohydrate degradation; glycolysis; D-glyceraldehyde 3-phosphate from glycerone phosphate: step 1/1. Functionally, involved in the gluconeogenesis. Catalyzes stereospecifically the conversion of dihydroxyacetone phosphate (DHAP) to D-glyceraldehyde-3-phosphate (G3P). This is Triosephosphate isomerase from Methanobacterium bryantii.